The following is a 444-amino-acid chain: 23S rRNA (uracil(1939)-C(5))-methyltransferase RlmD (444 aa).

The TRAM domain maps to 5–67 (RNRFDRTPFQ…RHFDEAKTVE (63 aa)). 4 residues coordinate [4Fe-4S] cluster: C80, C86, C89, and C168. Residues Q276, F305, N310, E326, D353, and D374 each coordinate S-adenosyl-L-methionine. C400 (nucleophile) is an active-site residue.

The protein belongs to the class I-like SAM-binding methyltransferase superfamily. RNA M5U methyltransferase family. RlmD subfamily.

The catalysed reaction is uridine(1939) in 23S rRNA + S-adenosyl-L-methionine = 5-methyluridine(1939) in 23S rRNA + S-adenosyl-L-homocysteine + H(+). Functionally, catalyzes the formation of 5-methyl-uridine at position 1939 (m5U1939) in 23S rRNA. This is 23S rRNA (uracil(1939)-C(5))-methyltransferase RlmD from Xanthomonas oryzae pv. oryzae (strain KACC10331 / KXO85).